The chain runs to 246 residues: Granzyme H (246 aa).

The first 18 residues, 1–18, serve as a signal peptide directing secretion; the sequence is MQPFLLLLAFLLTPGAGT. A propeptide spans 19 to 20 (activation peptide); sequence EE. In terms of domain architecture, Peptidase S1 spans 21-244; it reads IIGGHEAKPH…FLPWIKRTMK (224 aa). The tract at residues 46 to 48 is mediates the preference for acidic residues at the P3' and P4' sites; sequence RKR. Cysteines 49 and 65 form a disulfide. The active-site Charge relay system is the H64. N-linked (GlcNAc...) asparagine glycosylation is found at N71 and N104. D108 functions as the Charge relay system in the catalytic mechanism. Intrachain disulfides connect C142/C208 and C172/C187. N179 carries N-linked (GlcNAc...) asparagine glycosylation. S202 functions as the Charge relay system in the catalytic mechanism.

This sequence belongs to the peptidase S1 family. Granzyme subfamily. As to expression, constitutively expressed in NK cells.

It localises to the cytolytic granule. Its activity is regulated as follows. Inhibited by SERPINB1. Cytotoxic chymotrypsin-like serine protease with preference for bulky and aromatic residues at the P1 position and acidic residues at the P3' and P4' sites. Probably necessary for target cell lysis in cell-mediated immune responses. Participates in the antiviral response via direct cleavage of several proteins essential for viral replication. The polypeptide is Granzyme H (GZMH) (Homo sapiens (Human)).